Here is a 263-residue protein sequence, read N- to C-terminus: Small ribosomal subunit protein uS2m (263 aa).

The N-terminal 15 residues, 1–15 (MLSRKLSPEQLVARR), are a transit peptide targeting the mitochondrion.

Belongs to the universal ribosomal protein uS2 family. As to quaternary structure, component of the mitochondrial small ribosomal subunit (mt-SSU). Mature yeast 74S mitochondrial ribosomes consist of a small (37S) and a large (54S) subunit. The 37S small subunit contains a 15S ribosomal RNA (15S mt-rRNA) and at least 32 different proteins. The 54S large subunit contains a 21S rRNA (21S mt-rRNA) and at least 45 different proteins.

The protein resides in the mitochondrion. Functionally, component of the mitochondrial ribosome (mitoribosome), a dedicated translation machinery responsible for the synthesis of mitochondrial genome-encoded proteins, including at least some of the essential transmembrane subunits of the mitochondrial respiratory chain. The mitoribosomes are attached to the mitochondrial inner membrane and translation products are cotranslationally integrated into the membrane. This Schizosaccharomyces pombe (strain 972 / ATCC 24843) (Fission yeast) protein is Small ribosomal subunit protein uS2m.